We begin with the raw amino-acid sequence, 444 residues long: Protein kinase C and casein kinase substrate in neurons protein 1 (444 aa).

Ser-2 and Ser-79 each carry phosphoserine. The 271-residue stretch at 13–283 (EETTDSFWEV…AIRGADAQED (271 aa)) folds into the F-BAR domain. The stretch at 26–275 (KRTVKRIDDG…HVYRELEQAI (250 aa)) forms a coiled coil. Disordered regions lie at residues 175 to 194 (MNSK…LQDK) and 309 to 386 (LPHT…DDSK). The residue at position 184 (Thr-184) is a Phosphothreonine. Positions 314–324 (TKKEKQPKKAE) are enriched in basic and acidic residues. Residues 329–351 (TNATGAVESTSQAGDRGSVSSYD) show a composition bias toward polar residues. Phosphoserine is present on residues Ser-346, Ser-348, Ser-349, Ser-361, and Ser-365. An SH3 domain is found at 385-444 (SKGVRVRALYDYDGQEQDELSFKAGDELTKLGEEDEQGWCRGRLDSGQLGLYPANYVEAI). Tyr-394 is modified (phosphotyrosine). Residues Ser-405 and Ser-430 each carry the phosphoserine modification.

The protein belongs to the PACSIN family. In terms of assembly, may form heterooligomers with other PACSINs. Interacts with MAPT. Interacts with TRPV4. Interacts (via SH3 domain) with SYNJ1 and WASL. Interacts with DNM2 and DNM3. Interacts with both COBL and DBNL. Identified in a complex composed of COBL, PACSIN1 and WASL. Interacts with EHD1 and EHD3. Homodimer. Interacts (via SH3 domain) with DNM1; the interaction is reduced by DNM1 phosphorylation. Post-translationally, phosphorylated by casein kinase 2 (CK2) and protein kinase C (PKC). As to expression, highly expressed in brain and, at much lower levels, in heart and pancreas.

It is found in the cytoplasm. The protein localises to the cell projection. It localises to the synapse. The protein resides in the synaptosome. Its subcellular location is the ruffle membrane. It is found in the membrane. The protein localises to the cytoplasmic vesicle membrane. It localises to the cytosol. The protein resides in the cell membrane. Functionally, plays a role in the reorganization of the microtubule cytoskeleton via its interaction with MAPT; this decreases microtubule stability and inhibits MAPT-induced microtubule polymerization. Plays a role in cellular transport processes by recruiting DNM1, DNM2 and DNM3 to membranes. Plays a role in the reorganization of the actin cytoskeleton and in neuron morphogenesis via its interaction with COBL and WASL, and by recruiting COBL to the cell cortex. Plays a role in the regulation of neurite formation, neurite branching and the regulation of neurite length. Required for normal synaptic vesicle endocytosis; this process retrieves previously released neurotransmitters to accommodate multiple cycles of neurotransmission. Required for normal excitatory and inhibitory synaptic transmission. Binds to membranes via its F-BAR domain and mediates membrane tubulation. In Homo sapiens (Human), this protein is Protein kinase C and casein kinase substrate in neurons protein 1 (PACSIN1).